Consider the following 1075-residue polypeptide: Atos homolog protein A (1075 aa).

A transactivation domain 1 (TAD1) region spans residues 24–32; that stretch reads ALLITEGRT. 3 disordered regions span residues 430-469, 570-592, and 703-766; these read FGSP…RQPA, YSPQ…PDSI, and LNKN…PHSV. Positions 440–454 are enriched in basic and acidic residues; the sequence is DSREGKVREKSETRP. Residues 703-712 are compositionally biased toward polar residues; that stretch reads LNKNKTNCSS. Basic and acidic residues predominate over residues 746–759; the sequence is DRLKTEQEAKRDSG. The segment at 878 to 935 is required for macropage invasion; it reads LLGNFEESVLNYRLDPLGIVDGFTAEVGASGTFCPTHLTLPVEVSFYSVSDDNAPSPY. A transactivation domain 2 (TAD2) region spans residues 962 to 970; sequence FNPNKTVVK.

The protein belongs to the ATOS family.

It is found in the nucleus. Transcription regulator that syncronizes transcriptional and translational programs to promote macrophage invasion of tissues. This Mus musculus (Mouse) protein is Atos homolog protein A (Atosa).